Reading from the N-terminus, the 365-residue chain is Aminomethyltransferase (365 aa).

This sequence belongs to the GcvT family. The glycine cleavage system is composed of four proteins: P, T, L and H.

The catalysed reaction is N(6)-[(R)-S(8)-aminomethyldihydrolipoyl]-L-lysyl-[protein] + (6S)-5,6,7,8-tetrahydrofolate = N(6)-[(R)-dihydrolipoyl]-L-lysyl-[protein] + (6R)-5,10-methylene-5,6,7,8-tetrahydrofolate + NH4(+). Functionally, the glycine cleavage system catalyzes the degradation of glycine. The protein is Aminomethyltransferase of Yersinia pseudotuberculosis serotype O:3 (strain YPIII).